We begin with the raw amino-acid sequence, 208 residues long: Interferon epsilon (208 aa).

A signal peptide spans 1–21 (MIIKHFFGTVLVLLASTTIFS). Residues Cys53 and Cys163 are joined by a disulfide bond. Asn95 and Asn104 each carry an N-linked (GlcNAc...) asparagine glycan.

Belongs to the alpha/beta interferon family. As to expression, endometrium-specific.

The protein localises to the secreted. Functionally, type I interferon required for maintaining basal levels of IFN-regulated genes, including 2'-5'-oligoadenylate synthetase, IRF7 and ISG15, in the female reproductive tract. Directly mediates protection against viral and bacterial genital infections. This chain is Interferon epsilon (IFNE), found in Homo sapiens (Human).